The following is a 175-amino-acid chain: Inosine/xanthosine triphosphatase (175 aa).

8-13 is a substrate binding site; sequence TTNPAK. Residues glutamate 38 and glutamate 68 each contribute to the Mg(2+) site. Substrate is bound at residue 68–69; that stretch reads EA.

Belongs to the YjjX NTPase family. Homodimer. The cofactor is Mg(2+). Requires Mn(2+) as cofactor.

The enzyme catalyses XTP + H2O = XDP + phosphate + H(+). The catalysed reaction is ITP + H2O = IDP + phosphate + H(+). Its function is as follows. Phosphatase that hydrolyzes non-canonical purine nucleotides such as XTP and ITP to their respective diphosphate derivatives. Probably excludes non-canonical purines from DNA/RNA precursor pool, thus preventing their incorporation into DNA/RNA and avoiding chromosomal lesions. The chain is Inosine/xanthosine triphosphatase (yjjX) from Escherichia coli O127:H6 (strain E2348/69 / EPEC).